The primary structure comprises 171 residues: Ribosome-binding factor A (171 aa).

The span at 126–138 (VREGAKHAGDADP) shows a compositional bias: basic and acidic residues. A disordered region spans residues 126–171 (VREGAKHAGDADPYRVSGVEEEAGGSGEVQAEFDAEDTGDRNRQDD).

It belongs to the RbfA family. In terms of assembly, monomer. Binds 30S ribosomal subunits, but not 50S ribosomal subunits or 70S ribosomes.

It is found in the cytoplasm. One of several proteins that assist in the late maturation steps of the functional core of the 30S ribosomal subunit. Associates with free 30S ribosomal subunits (but not with 30S subunits that are part of 70S ribosomes or polysomes). Required for efficient processing of 16S rRNA. May interact with the 5'-terminal helix region of 16S rRNA. This is Ribosome-binding factor A from Mycobacterium sp. (strain JLS).